Reading from the N-terminus, the 215-residue chain is Pyridoxine/pyridoxamine 5'-phosphate oxidase (215 aa).

Substrate contacts are provided by residues 9-12 (RRDY) and Lys-69. Residues 64 to 69 (RVLLLK), 79 to 80 (FS), Lys-86, and Gln-108 each bind FMN. Substrate-binding residues include Tyr-126, Arg-130, and Ser-134. FMN contacts are provided by residues 143–144 (QS) and Trp-188. 194 to 196 (RLH) contacts substrate. Arg-198 serves as a coordination point for FMN.

It belongs to the pyridoxamine 5'-phosphate oxidase family. Homodimer. It depends on FMN as a cofactor.

It catalyses the reaction pyridoxamine 5'-phosphate + O2 + H2O = pyridoxal 5'-phosphate + H2O2 + NH4(+). The catalysed reaction is pyridoxine 5'-phosphate + O2 = pyridoxal 5'-phosphate + H2O2. It participates in cofactor metabolism; pyridoxal 5'-phosphate salvage; pyridoxal 5'-phosphate from pyridoxamine 5'-phosphate: step 1/1. It functions in the pathway cofactor metabolism; pyridoxal 5'-phosphate salvage; pyridoxal 5'-phosphate from pyridoxine 5'-phosphate: step 1/1. Catalyzes the oxidation of either pyridoxine 5'-phosphate (PNP) or pyridoxamine 5'-phosphate (PMP) into pyridoxal 5'-phosphate (PLP). This chain is Pyridoxine/pyridoxamine 5'-phosphate oxidase, found in Ectopseudomonas mendocina (strain ymp) (Pseudomonas mendocina).